A 284-amino-acid chain; its full sequence is 4-diphosphocytidyl-2-C-methyl-D-erythritol kinase (284 aa).

Lys-14 is a catalytic residue. Residue 97-107 participates in ATP binding; that stretch reads PMGGGLGGGSS. The active site involves Asp-139.

It belongs to the GHMP kinase family. IspE subfamily.

It catalyses the reaction 4-CDP-2-C-methyl-D-erythritol + ATP = 4-CDP-2-C-methyl-D-erythritol 2-phosphate + ADP + H(+). It participates in isoprenoid biosynthesis; isopentenyl diphosphate biosynthesis via DXP pathway; isopentenyl diphosphate from 1-deoxy-D-xylulose 5-phosphate: step 3/6. Catalyzes the phosphorylation of the position 2 hydroxy group of 4-diphosphocytidyl-2C-methyl-D-erythritol. The polypeptide is 4-diphosphocytidyl-2-C-methyl-D-erythritol kinase (Psychromonas ingrahamii (strain DSM 17664 / CCUG 51855 / 37)).